Here is a 603-residue protein sequence, read N- to C-terminus: DNA mismatch repair protein MutL (603 aa).

It belongs to the DNA mismatch repair MutL/HexB family.

This protein is involved in the repair of mismatches in DNA. It is required for dam-dependent methyl-directed DNA mismatch repair. May act as a 'molecular matchmaker', a protein that promotes the formation of a stable complex between two or more DNA-binding proteins in an ATP-dependent manner without itself being part of a final effector complex. This Bradyrhizobium diazoefficiens (strain JCM 10833 / BCRC 13528 / IAM 13628 / NBRC 14792 / USDA 110) protein is DNA mismatch repair protein MutL.